A 202-amino-acid chain; its full sequence is uncharacterized protein (202 aa).

A helical transmembrane segment spans residues 10–30 (TAAIFLLCCTSVIILFTIAVV).

The protein belongs to the bacterial sugar transferase family.

The protein resides in the cell membrane. May be involved in the production of the exopolysaccharide (EPS) component of the extracellular matrix during biofilm formation. EPS is responsible for the adhesion of chains of cells into bundles. This is an uncharacterized protein from Bacillus subtilis (strain 168).